Here is an 829-residue protein sequence, read N- to C-terminus: MKTAVFGRDSGEPGSPCGAPPSLTFTPPATLVPPTHHHSRSTNRGGVSGTGGGGSGGLQGAPGAGGPRASHSSRRTSRLHNNVSALGVLSLGADVLPEYKLQPTRIHHCTIVHYSPFKAVWDWIILLLVIYTAVFTPYVAAFLLRELQDTAKKSRFTEPLEIVDLIVDIMFIVDIIINFRTTYVNENDEACQVVSDPGKIATHYFKGWFIIDMVAAVPFDLLLVSTNSDETTTLIGLLKTARLLRLVRVARKLDRYSEYGAAVLLLLMATFALIAHWLACIWYAIGSAELSHKEYTWLHQLSKQLAQPYTSTNGTIPTGGPTLKSRYVTSLYFTLSTITSIGFGNVSATTDSEKIFTIIMMILGSLMYASVFGNVSAIIQRLYSGTARYHTEMSRLREFIRFHQIPNPLRQRLEEYFQHAWSYTNGIDMNLVLKGFPDCLQADICLHLNRNLLSGCAAFAGSTPGCLRALSMRFRTTHSPPGDTLVHRGDILTGLYFIARGSVEILNDDNTVMGILGKDDIFGENPLLYDEVGKSSCNVRALTYCDLHKILRDDLLDVLDMYPEFAETFCKNLTITYNLRDDAQSLRKKFDRHKLLRMSSSMNKDRYTTPPDGDHGNAAVRRSAESVSRCDSNPIDRRQSAGSRSSSRCSPPHAALTATRSEATPLLRRSTNHHEEDDALFDDIRAFARGNTVTMSPTVAGNSVSPTTAIHNDGIHSQQLSDRSDDYEERRANMFGRRLESIESQMERMQNKFNSDMETLIKLVKEQSIIRNNGSSNEEPNARYRPNNYISSAIRLPNGGGGGVVDEMRVSRLSSHEPPTPTQETDTIL.

A disordered region spans residues 1–76; sequence MKTAVFGRDS…PRASHSSRRT (76 aa). The Cytoplasmic segment spans residues 1–123; it reads MKTAVFGRDS…YSPFKAVWDW (123 aa). The span at 46 to 66 shows a compositional bias: gly residues; that stretch reads GVSGTGGGGSGGLQGAPGAGG. Residues 124–144 form a helical membrane-spanning segment; that stretch reads IILLLVIYTAVFTPYVAAFLL. The Extracellular segment spans residues 145 to 158; it reads RELQDTAKKSRFTE. The chain crosses the membrane as a helical span at residues 159–179; the sequence is PLEIVDLIVDIMFIVDIIINF. The Cytoplasmic portion of the chain corresponds to 180-203; that stretch reads RTTYVNENDEACQVVSDPGKIATH. Residues 204 to 224 traverse the membrane as a helical segment; the sequence is YFKGWFIIDMVAAVPFDLLLV. Topologically, residues 225–234 are extracellular; sequence STNSDETTTL. Residues 235-255 traverse the membrane as a helical; Voltage-sensor segment; the sequence is IGLLKTARLLRLVRVARKLDR. Residues 256-261 lie on the Cytoplasmic side of the membrane; that stretch reads YSEYGA. The helical transmembrane segment at 262–282 threads the bilayer; sequence AVLLLLMATFALIAHWLACIW. Residues 283–327 are Extracellular-facing; the sequence is YAIGSAELSHKEYTWLHQLSKQLAQPYTSTNGTIPTGGPTLKSRY. Asn-313 carries N-linked (GlcNAc...) asparagine glycosylation. Residues 328–348 constitute an intramembrane region (pore-forming); that stretch reads VTSLYFTLSTITSIGFGNVSA. The Extracellular segment spans residues 349–354; the sequence is TTDSEK. Residues 355–375 traverse the membrane as a helical segment; the sequence is IFTIIMMILGSLMYASVFGNV. At 376–829 the chain is on the cytoplasmic side; that stretch reads SAIIQRLYSG…TPTQETDTIL (454 aa). Residue 458–559 participates in a nucleoside 3',5'-cyclic phosphate binding; it reads AFAGSTPGCL…ILRDDLLDVL (102 aa). The tract at residues 601–674 is disordered; the sequence is SMNKDRYTTP…PLLRRSTNHH (74 aa). A compositionally biased stretch (basic and acidic residues) spans 603-615; sequence NKDRYTTPPDGDH. Residues 640-650 show a composition bias toward low complexity; that stretch reads SAGSRSSSRCS.

This sequence belongs to the potassium channel family. H (Eag) (TC 1.A.1.20) subfamily. Kv11.1/KCNH2 sub-subfamily. As to quaternary structure, the potassium channel is composed of a homo- or heterotetrameric complex. Interacts with dnj-1; dnj-1 chaperone promotes tetramerization.

Its subcellular location is the cell membrane. Functionally, pore-forming (alpha) subunit of voltage-gated inwardly rectifying potassium channel. Channel properties are modulated by cAMP and subunit assembly. Regulates the movements of the male's copulatory spicules before and during male mating behavior. This is Potassium voltage-gated channel unc-103 from Caenorhabditis elegans.